We begin with the raw amino-acid sequence, 308 residues long: Tetraacyldisaccharide 4'-kinase (308 aa).

Residue 63-70 (SFGGNGKT) participates in ATP binding.

This sequence belongs to the LpxK family.

The catalysed reaction is a lipid A disaccharide + ATP = a lipid IVA + ADP + H(+). It participates in glycolipid biosynthesis; lipid IV(A) biosynthesis; lipid IV(A) from (3R)-3-hydroxytetradecanoyl-[acyl-carrier-protein] and UDP-N-acetyl-alpha-D-glucosamine: step 6/6. Transfers the gamma-phosphate of ATP to the 4'-position of a tetraacyldisaccharide 1-phosphate intermediate (termed DS-1-P) to form tetraacyldisaccharide 1,4'-bis-phosphate (lipid IVA). The polypeptide is Tetraacyldisaccharide 4'-kinase (Campylobacter jejuni (strain RM1221)).